The chain runs to 199 residues: Recombination protein RecR (199 aa).

Residues 58–73 form a C4-type zinc finger; it reads CSACGNVDTQDPCAIC. Residues 81 to 176 form the Toprim domain; sequence HILCIVEEVG…SVSRLAHGVP (96 aa).

The protein belongs to the RecR family.

Its function is as follows. May play a role in DNA repair. It seems to be involved in an RecBC-independent recombinational process of DNA repair. It may act with RecF and RecO. The chain is Recombination protein RecR from Parvibaculum lavamentivorans (strain DS-1 / DSM 13023 / NCIMB 13966).